Here is a 168-residue protein sequence, read N- to C-terminus: Transcription antitermination protein NusB (168 aa).

Residues 147-168 (RGLINNSSRNTSRSEEKHSTEK) form a disordered region. Residues 158-168 (SRSEEKHSTEK) show a composition bias toward basic and acidic residues.

This sequence belongs to the NusB family.

Functionally, involved in transcription antitermination. Required for transcription of ribosomal RNA (rRNA) genes. Binds specifically to the boxA antiterminator sequence of the ribosomal RNA (rrn) operons. This chain is Transcription antitermination protein NusB, found in Chlorobium phaeobacteroides (strain BS1).